We begin with the raw amino-acid sequence, 130 residues long: Small ribosomal subunit protein uS9 (130 aa).

Positions 105-130 are disordered; the sequence is TRDARMKERKKPGLKKARKASQFSKR. Positions 111 to 130 are enriched in basic residues; it reads KERKKPGLKKARKASQFSKR.

It belongs to the universal ribosomal protein uS9 family.

This chain is Small ribosomal subunit protein uS9, found in Lactiplantibacillus plantarum (strain ATCC BAA-793 / NCIMB 8826 / WCFS1) (Lactobacillus plantarum).